The following is a 347-amino-acid chain: Methylthioribose-1-phosphate isomerase (347 aa).

Substrate contacts are provided by residues 45–47 (RGA), R88, and Q197. D238 serves as the catalytic Proton donor. 248–249 (NK) is a substrate binding site.

It belongs to the eIF-2B alpha/beta/delta subunits family. MtnA subfamily.

It catalyses the reaction 5-(methylsulfanyl)-alpha-D-ribose 1-phosphate = 5-(methylsulfanyl)-D-ribulose 1-phosphate. The protein operates within amino-acid biosynthesis; L-methionine biosynthesis via salvage pathway; L-methionine from S-methyl-5-thio-alpha-D-ribose 1-phosphate: step 1/6. Its function is as follows. Catalyzes the interconversion of methylthioribose-1-phosphate (MTR-1-P) into methylthioribulose-1-phosphate (MTRu-1-P). This Trichormus variabilis (strain ATCC 29413 / PCC 7937) (Anabaena variabilis) protein is Methylthioribose-1-phosphate isomerase.